Consider the following 316-residue polypeptide: Olfactory receptor 1N2 (316 aa).

Over 1–28 the chain is Extracellular; the sequence is MGKPGRVNQTTVSDFLLLGLSEWPEEQP. A glycan (N-linked (GlcNAc...) asparagine) is linked at Asn-8. The chain crosses the membrane as a helical span at residues 29-49; that stretch reads LLFGIFLGMYLVTMVGNLLII. At 50–60 the chain is on the cytoplasmic side; the sequence is LAISSDPHLHT. The helical transmembrane segment at 61-81 threads the bilayer; the sequence is PMYFFLANLSLTDACFTSASI. Over 82–100 the chain is Extracellular; the sequence is PKMLANIHTQSQIISYSGC. A disulfide bridge connects residues Cys-100 and Cys-182. The helical transmembrane segment at 101-121 threads the bilayer; it reads LAQLYFLLMFGGLDNCLLAVM. Residues 122-145 lie on the Cytoplasmic side of the membrane; it reads AYDRYVAICQPLHYSTSMSPQLCA. A helical transmembrane segment spans residues 146 to 166; sequence LMLGVCWVLTNCPALMHTLLL. The Extracellular portion of the chain corresponds to 167 to 199; it reads TRVAFCAQKAIPHFYCDPSALLKLACSDTHVNE. A helical membrane pass occupies residues 200–220; that stretch reads LMIITMGLLFLTVPLLLIVFS. The Cytoplasmic portion of the chain corresponds to 221-243; that stretch reads YVRIFWAVFVISSPGGRWKAFST. Residues 244-264 form a helical membrane-spanning segment; it reads CGSHLTVVLLFYGSLMGVYLL. Over 265-274 the chain is Extracellular; the sequence is PPSTYSTERE. Residues 275 to 295 form a helical membrane-spanning segment; that stretch reads SRAAVLYMVIIPTLNPFIYSL. The Cytoplasmic segment spans residues 296–316; it reads RNRDMKEALGKLFVSGKTFFL.

Belongs to the G-protein coupled receptor 1 family.

Its subcellular location is the membrane. Its function is as follows. Odorant receptor. The sequence is that of Olfactory receptor 1N2 (OR1N2) from Homo sapiens (Human).